Here is a 275-residue protein sequence, read N- to C-terminus: NH(3)-dependent NAD(+) synthetase (275 aa).

Position 50-57 (50-57) interacts with ATP; that stretch reads GISGGVDS. Mg(2+) is bound at residue aspartate 56. A deamido-NAD(+)-binding site is contributed by arginine 147. Threonine 167 provides a ligand contact to ATP. Position 172 (glutamate 172) interacts with Mg(2+). Deamido-NAD(+) is bound by residues lysine 180 and aspartate 187. ATP contacts are provided by lysine 196 and threonine 218. Deamido-NAD(+) is bound at residue 267–268; the sequence is HK.

This sequence belongs to the NAD synthetase family. As to quaternary structure, homodimer.

It catalyses the reaction deamido-NAD(+) + NH4(+) + ATP = AMP + diphosphate + NAD(+) + H(+). It participates in cofactor biosynthesis; NAD(+) biosynthesis; NAD(+) from deamido-NAD(+) (ammonia route): step 1/1. Its function is as follows. Catalyzes the ATP-dependent amidation of deamido-NAD to form NAD. Uses ammonia as a nitrogen source. This is NH(3)-dependent NAD(+) synthetase from Stutzerimonas stutzeri (strain A1501) (Pseudomonas stutzeri).